We begin with the raw amino-acid sequence, 141 residues long: Pyrophosphate-energized proton pump (141 aa).

3 consecutive transmembrane segments (helical) span residues 11–31, 46–66, and 121–141; these read GLIA…TLTV, GTNL…IVVI, and LAGL…AGMI.

It belongs to the H(+)-translocating pyrophosphatase (TC 3.A.10) family. As to quaternary structure, homodimer. The cofactor is Mg(2+).

It localises to the cell inner membrane. The catalysed reaction is diphosphate + H2O + H(+)(in) = 2 phosphate + 2 H(+)(out). Its function is as follows. Proton pump that utilizes the energy of pyrophosphate hydrolysis as the driving force for proton movement across the membrane. Generates a proton motive force. This chain is Pyrophosphate-energized proton pump (hppA), found in Anaplasma marginale.